Reading from the N-terminus, the 518-residue chain is MKRQIDYSLYLVTSSSLIAPGSTIERQVEEGILGGVTLVQHREKDISTKCFVERAKRLSEICKKYDVPFLINDRIDVALAVGADGVHIGQDDMDCALARKILGDDAIIGVSTNNIEEIEKAAADGADYVGIGSIYETNTKDVKDRLIGITGLRKILEHVSKMHCQLGTVAIAGLNSSNIQRVIYLSEANGKRIDGIALVSAIMCSITPRETAKELRNLIATPPCFAQARSSLTTPKDLLNQIPAALQKLKDFTPLIHHLTNAVAKNFSANVTLAAYGSPTMGESYDEVADFAKAPGALVLNIGILENTKTYIHAAQVNNDLARPVILDPVAVGATTARSKVINTLLNYAYYDIIKGNEGEIMNLAGEQGLMRGVDSISQHTLAARITAVHRLAVERRCVVAMSGAVDVISDGNSTYVIKNGNPLLGQITASGCSLGSVMGVTASICQNDKLLAAITATLLYNIASELAVEAKNSCGDLLVQGPGTFIPIFVDKLHQLINETIKGNVDWIERAKLEKAE.

Residues 1 to 229 are thiamine-phosphate synthase; the sequence is MKRQIDYSLY…ATPPCFAQAR (229 aa). 4-amino-2-methyl-5-(diphosphooxymethyl)pyrimidine-binding positions include 40–44 and N72; that span reads QHREK. Residues D73 and D92 each contribute to the Mg(2+) site. 4-amino-2-methyl-5-(diphosphooxymethyl)pyrimidine is bound at residue S111. Residue 137-139 participates in 2-[(2R,5Z)-2-carboxy-4-methylthiazol-5(2H)-ylidene]ethyl phosphate binding; the sequence is TNT. K140 provides a ligand contact to 4-amino-2-methyl-5-(diphosphooxymethyl)pyrimidine. 2-[(2R,5Z)-2-carboxy-4-methylthiazol-5(2H)-ylidene]ethyl phosphate is bound by residues G173 and 199–200; that span reads VS. The segment at 230–518 is hydroxyethylthiazole kinase; it reads SSLTTPKDLL…IERAKLEKAE (289 aa). Position 281 (M281) interacts with 5-(2-hydroxyethyl)-4-methylthiazole. Residues K355 and S403 each coordinate ATP. 5-(2-hydroxyethyl)-4-methylthiazole is bound at residue A430. C433 acts as the Proton acceptor; for hydroxyethylthiazole kinase activity in catalysis.

This sequence in the N-terminal section; belongs to the thiamine-phosphate synthase family. It in the C-terminal section; belongs to the Thz kinase family. Mg(2+) serves as cofactor.

The enzyme catalyses 2-[(2R,5Z)-2-carboxy-4-methylthiazol-5(2H)-ylidene]ethyl phosphate + 4-amino-2-methyl-5-(diphosphooxymethyl)pyrimidine + 2 H(+) = thiamine phosphate + CO2 + diphosphate. It catalyses the reaction 2-(2-carboxy-4-methylthiazol-5-yl)ethyl phosphate + 4-amino-2-methyl-5-(diphosphooxymethyl)pyrimidine + 2 H(+) = thiamine phosphate + CO2 + diphosphate. It carries out the reaction 4-methyl-5-(2-phosphooxyethyl)-thiazole + 4-amino-2-methyl-5-(diphosphooxymethyl)pyrimidine + H(+) = thiamine phosphate + diphosphate. The catalysed reaction is 5-(2-hydroxyethyl)-4-methylthiazole + ATP = 4-methyl-5-(2-phosphooxyethyl)-thiazole + ADP + H(+). It participates in cofactor biosynthesis; thiamine diphosphate biosynthesis; 4-methyl-5-(2-phosphoethyl)-thiazole from 5-(2-hydroxyethyl)-4-methylthiazole: step 1/1. It functions in the pathway cofactor biosynthesis; thiamine diphosphate biosynthesis; thiamine phosphate from 4-amino-2-methyl-5-diphosphomethylpyrimidine and 4-methyl-5-(2-phosphoethyl)-thiazole: step 1/1. Its function is as follows. Condenses 4-methyl-5-(beta-hydroxyethyl)thiazole monophosphate (THZ-P) and 2-methyl-4-amino-5-hydroxymethyl pyrimidine pyrophosphate (HMP-PP) to form thiamine monophosphate (TMP). This is Probable thiamine biosynthetic bifunctional enzyme (thi4) from Schizosaccharomyces pombe (strain 972 / ATCC 24843) (Fission yeast).